Here is a 310-residue protein sequence, read N- to C-terminus: Putative F-box protein PP2-B2 (310 aa).

A disordered region spans residues 1-34 (MIQSTMGHKQSVDSRGKGRKVPGSSSMVQKHRVE). The region spanning 44–90 (PSLFDNLPEDCISNIISFTSPRDACVAASVSKTFESAVNSDSVWDKF) is the F-box domain.

The sequence is that of Putative F-box protein PP2-B2 (PP2B2) from Arabidopsis thaliana (Mouse-ear cress).